Reading from the N-terminus, the 158-residue chain is Phosphopantetheine adenylyltransferase (158 aa).

Threonine 10 contacts substrate. Residues 10 to 11 (TF) and histidine 18 contribute to the ATP site. 3 residues coordinate substrate: lysine 42, leucine 74, and arginine 88. Residues 89 to 91 (GIR), glutamate 99, and 124 to 130 (WRYLSST) contribute to the ATP site.

Belongs to the bacterial CoaD family. Homohexamer. It depends on Mg(2+) as a cofactor.

It localises to the cytoplasm. It carries out the reaction (R)-4'-phosphopantetheine + ATP + H(+) = 3'-dephospho-CoA + diphosphate. The protein operates within cofactor biosynthesis; coenzyme A biosynthesis; CoA from (R)-pantothenate: step 4/5. Functionally, reversibly transfers an adenylyl group from ATP to 4'-phosphopantetheine, yielding dephospho-CoA (dPCoA) and pyrophosphate. The sequence is that of Phosphopantetheine adenylyltransferase from Actinobacillus pleuropneumoniae serotype 3 (strain JL03).